The primary structure comprises 143 residues: MNKTIIREGKINLGKWFIIDATDKNLGRLASETAKTLVGKYDPLYAPNVNPKNIIVIINADKIRVTGNKKFDKFYYRHSGQVGGLTIETFNELQSRLPGRILEKAVKGILPKGPLGRELFNNLKVYAGSSHPHEAQNPVALVM.

This sequence belongs to the universal ribosomal protein uL13 family. As to quaternary structure, part of the 50S ribosomal subunit.

Its subcellular location is the plastid. The protein localises to the chloroplast. The sequence is that of Large ribosomal subunit protein uL13c from Guillardia theta (Cryptophyte).